Here is a 589-residue protein sequence, read N- to C-terminus: LRR receptor-like serine/threonine-protein kinase FEI 2 (589 aa).

The first 28 residues, 1 to 28 (MGICLMKRCCSWFLLISFLSALTNENEA), serve as a signal peptide directing secretion. The Extracellular segment spans residues 29 to 236 (ISPDGEALLS…TGQGGNNPKR (208 aa)). 5 LRR repeats span residues 72-96 (TKRV…LGKL), 97-120 (DQLR…LGNC), 122-144 (ALEG…IGNL), 145-168 (SGLK…LGQL), and 170-193 (RLTK…LLAR). 2 N-linked (GlcNAc...) asparagine glycosylation sites follow: asparagine 119 and asparagine 143. N-linked (GlcNAc...) asparagine glycosylation is found at asparagine 175, asparagine 215, and asparagine 219. Residues 237–257 (LLISASATVGGLLLVALMCFW) traverse the membrane as a helical segment. The Cytoplasmic portion of the chain corresponds to 258–589 (GCFLYKKLGR…PSDFYDSSSD (332 aa)). A Protein kinase domain is found at 304–576 (LNEEHIIGCG…VVQLLESEVM (273 aa)). ATP contacts are provided by residues 310 to 318 (IGCGGFGTV) and lysine 332. Serine 384 bears the Phosphoserine mark. The active-site Proton acceptor is the aspartate 427. Threonine 460, threonine 461, and threonine 466 each carry phosphothreonine. Phosphotyrosine is present on tyrosine 474.

This sequence belongs to the protein kinase superfamily. Ser/Thr protein kinase family. In terms of assembly, interacts with the ACC synthases ACS5 and ACS9 but not ACS2, via the kinase domain. Post-translationally, autophosphorylated. As to expression, expressed in the root meristem and elongation zone, and in hypocotyls of etiolated seedlings.

It localises to the cell membrane. The enzyme catalyses L-seryl-[protein] + ATP = O-phospho-L-seryl-[protein] + ADP + H(+). The catalysed reaction is L-threonyl-[protein] + ATP = O-phospho-L-threonyl-[protein] + ADP + H(+). In terms of biological role, involved in the signaling pathway that regulates cell wall function, including cellulose biosynthesis, likely via an 1-aminocyclopropane-1-carboxylic acid (ACC)-mediated signal (a precursor of ethylene). The sequence is that of LRR receptor-like serine/threonine-protein kinase FEI 2 (FEI2) from Arabidopsis thaliana (Mouse-ear cress).